The primary structure comprises 492 residues: Phenylalanine--tRNA ligase alpha subunit (492 aa).

L-phenylalanine is bound by residues Thr335, 374–376 (QLE), and Tyr414. Glu416 is a Mg(2+) binding site. Phe439 is a binding site for L-phenylalanine.

The protein belongs to the class-II aminoacyl-tRNA synthetase family. Phe-tRNA synthetase alpha subunit type 2 subfamily. In terms of assembly, tetramer of two alpha and two beta subunits. Requires Mg(2+) as cofactor.

The protein localises to the cytoplasm. The enzyme catalyses tRNA(Phe) + L-phenylalanine + ATP = L-phenylalanyl-tRNA(Phe) + AMP + diphosphate + H(+). The chain is Phenylalanine--tRNA ligase alpha subunit from Methanosarcina acetivorans (strain ATCC 35395 / DSM 2834 / JCM 12185 / C2A).